The primary structure comprises 274 residues: Lectizyme (274 aa).

Positions 1–16 (MKFFAVFALCVASVSA) are cleaved as a signal peptide. One can recognise a Peptidase S1 domain in the interval 32–268 (IINGHEAEKG…FDKWIEDSIE (237 aa)). A disulfide bond links Cys57 and Cys73. Residues His72 and Asp119 each act as charge relay system in the active site. 2 cysteine pairs are disulfide-bonded: Cys188/Cys204 and Cys215/Cys244. Ser219 serves as the catalytic Charge relay system.

Belongs to the peptidase S1 family. Expressed in the midgut.

It is found in the secreted. Functionally, protein with lectin and protease activity involved in the establishment of trypanosome infections in tsetse flies. Binds D-glucosamine and agglutinates bloodstream-form trypanosomes and rabbit red blood cells. Capable of inducing transformation of bloodstream-form trypanosomes into procyclic (midgut) forms in vitro. The chain is Lectizyme (Gpl) from Glossina austeni (Savannah tsetse fly).